Here is a 175-residue protein sequence, read N- to C-terminus: Ribosome-binding factor A (175 aa).

Positions 125 to 175 (TAKHAGEADPYKSDAPEDVDIDEDDFDEEDIDLAGDDDIDEDANKDADSSK) are disordered. A compositionally biased stretch (basic and acidic residues) spans 128 to 139 (HAGEADPYKSDA). Positions 140-165 (PEDVDIDEDDFDEEDIDLAGDDDIDE) are enriched in acidic residues. The segment covering 166 to 175 (DANKDADSSK) has biased composition (basic and acidic residues).

This sequence belongs to the RbfA family. In terms of assembly, monomer. Binds 30S ribosomal subunits, but not 50S ribosomal subunits or 70S ribosomes.

It is found in the cytoplasm. In terms of biological role, one of several proteins that assist in the late maturation steps of the functional core of the 30S ribosomal subunit. Associates with free 30S ribosomal subunits (but not with 30S subunits that are part of 70S ribosomes or polysomes). Required for efficient processing of 16S rRNA. May interact with the 5'-terminal helix region of 16S rRNA. The polypeptide is Ribosome-binding factor A (Pseudarthrobacter chlorophenolicus (strain ATCC 700700 / DSM 12829 / CIP 107037 / JCM 12360 / KCTC 9906 / NCIMB 13794 / A6) (Arthrobacter chlorophenolicus)).